A 193-amino-acid chain; its full sequence is Thymidine kinase (193 aa).

ATP contacts are provided by residues 16–23 and 89–92; these read GPMFSGKS and DEIQ. Glu-90 serves as the catalytic Proton acceptor. Zn(2+) contacts are provided by Cys-146, Cys-149, Cys-184, and Cys-187.

This sequence belongs to the thymidine kinase family. In terms of assembly, homotetramer.

It is found in the cytoplasm. It catalyses the reaction thymidine + ATP = dTMP + ADP + H(+). This is Thymidine kinase from Thermoanaerobacter pseudethanolicus (strain ATCC 33223 / 39E) (Clostridium thermohydrosulfuricum).